The sequence spans 217 residues: uncharacterized protein (217 aa).

This is an uncharacterized protein from Acidianus sp. F28 (AFV-2).